The following is a 652-amino-acid chain: Carboxypeptidase Z (652 aa).

The signal sequence occupies residues 1-20 (MPTTPLLLAALAALAALAVA). Residues 41–163 (THSATCVDLH…APEEEGCYDP (123 aa)) form the FZ domain. Cystine bridges form between C46–C112, C54–C105, C96–C132, C121–C160, and C125–C149. The N-linked (GlcNAc...) asparagine glycan is linked to N60. Residues 189-505 (AHHSYAQMVR…EPLLNFLEMV (317 aa)) form the Peptidase M14 domain. 2 residues coordinate Zn(2+): H251 and E254. N-linked (GlcNAc...) asparagine glycosylation occurs at N284. H383 is a binding site for Zn(2+). E475 acts as the Proton donor/acceptor in catalysis. Positions 594-628 (FLPGPSRALPRSLDPQGAPAQLDFEPPRARRQPAS) are disordered.

It belongs to the peptidase M14 family. Zn(2+) serves as cofactor. In terms of tissue distribution, abundantly expressed in the placenta, with low to moderate levels in the brain, lung, thymus and kidney.

Its subcellular location is the secreted. It is found in the extracellular space. The protein resides in the extracellular matrix. Its activity is regulated as follows. Inhibited by 2-mercaptomethyl-3-guanidinoethylthiopropanoic acid (MGTA) and guanidinoethylmercaptosuccinic acid (GEMSA). Inhibited by chelating agents such as EDTA and EGTA. Functionally, cleaves substrates with C-terminal arginine residues. Probably modulates the Wnt signaling pathway, by cleaving some undefined protein. May play a role in cleavage during prohormone processing. The protein is Carboxypeptidase Z (Cpz) of Rattus norvegicus (Rat).